A 99-amino-acid chain; its full sequence is Small integral membrane protein 14 (99 aa).

At 1–49 (MAEGGFDPCECVCSHEHAMRRLINLLRQSQSYCTDTECLQELPGPSSDN) the chain is on the lumenal side. The helical transmembrane segment at 50–70 (GISITMILMAWMVIAVILFLL) threads the bilayer. Residues 71 to 99 (RPPNLRGSNLTGKPASPHNGQDPPAPPVD) lie on the Cytoplasmic side of the membrane. The tract at residues 78–99 (SNLTGKPASPHNGQDPPAPPVD) is disordered.

The protein resides in the endoplasmic reticulum membrane. This chain is Small integral membrane protein 14 (SMIM14), found in Bos taurus (Bovine).